Here is a 193-residue protein sequence, read N- to C-terminus: Large ribosomal subunit protein bL25 (193 aa).

It belongs to the bacterial ribosomal protein bL25 family. CTC subfamily. As to quaternary structure, part of the 50S ribosomal subunit; part of the 5S rRNA/L5/L18/L25 subcomplex. Contacts the 5S rRNA. Binds to the 5S rRNA independently of L5 and L18.

In terms of biological role, this is one of the proteins that binds to the 5S RNA in the ribosome where it forms part of the central protuberance. The protein is Large ribosomal subunit protein bL25 of Clostridium tetani (strain Massachusetts / E88).